We begin with the raw amino-acid sequence, 130 residues long: Early E3B 14.5 kDa protein (130 aa).

A signal peptide spans 1–19 (MKRIVTFVLLIFCALPVLC). Residues 53–77 (AWLYAIISVMVFCSTIFALAIYPYL) form a helical membrane-spanning segment.

Belongs to the adenoviridae E3_14 family. Post-translationally, phosphorylated on serine; O-glycosylated, but not N-glycosylated.

It localises to the host membrane. In terms of biological role, down-regulates the EGF receptor and prevents cytolysis by TNF. In Human adenovirus C serotype 6 (HAdV-6), this protein is Early E3B 14.5 kDa protein.